Consider the following 115-residue polypeptide: Inner membrane protein YidH (115 aa).

The Cytoplasmic segment spans residues 1–30; it reads MKISRLGEAPDYRFSLANERTFLAWIRTAL. Residues 31–51 traverse the membrane as a helical segment; sequence GFLAAGVGLDQLAPDFATPVI. Over 52–53 the chain is Periplasmic; it reads RE. The helical transmembrane segment at 54-74 threads the bilayer; it reads LLALLLCLFSGGLAMYGYLRW. The Cytoplasmic portion of the chain corresponds to 75–92; the sequence is LRNEKAMRLKEDLPYTNS. The helical transmembrane segment at 93–113 threads the bilayer; it reads LLIISLILMVVAVIVMGLVLY. Topologically, residues 114 to 115 are periplasmic; that stretch reads AG.

To M.tuberculosis Rv2272.

It localises to the cell inner membrane. This is Inner membrane protein YidH (yidH) from Escherichia coli O157:H7.